Reading from the N-terminus, the 148-residue chain is Male-specific protein scotti (148 aa).

The segment at 56-78 is disordered; that stretch reads PQEPPLGVFPAQGGPNGPPRLRK. Asn129 is a glycosylation site (N-linked (GlcNAc...) asparagine).

Belongs to the male-specific scotti family.

In terms of biological role, post-meiotically transcribed gene that has a role in late spermiogenesis; required for actin cone progression during spermatid individualization. The chain is Male-specific protein scotti from Drosophila sechellia (Fruit fly).